Consider the following 399-residue polypeptide: uncharacterized protein (399 aa).

This sequence belongs to the NADH:flavin oxidoreductase/NADH oxidase family. Directly interacts with lipoylated GcvH-L (SpyM50867).

This is an uncharacterized protein from Streptococcus pyogenes serotype M5 (strain Manfredo).